Consider the following 157-residue polypeptide: Glycine-rich RNA-binding protein (157 aa).

The 79-residue stretch at 6–84 folds into the RRM domain; that stretch reads YRCFVGGLAW…RNITVNEAQS (79 aa). The disordered stretch occupies residues 70–157; it reads QELDGRNITV…YGGGGGGSRW (88 aa). 2 stretches are compositionally biased toward gly residues: residues 86–138 and 145–157; these read GSGG…GGYG and DGGYGGGGGGSRW.

May play a role in the biosynthesis and processing of heterogeneous nuclear RNA and in the maturation of specific mRNAs in response to wounding. This is Glycine-rich RNA-binding protein from Daucus carota (Wild carrot).